Consider the following 139-residue polypeptide: Nucleoside diphosphate kinase (139 aa).

The ATP site is built by Lys-11, Phe-59, Arg-87, Thr-93, Arg-104, and Asn-114. The active-site Pros-phosphohistidine intermediate is the His-117.

The protein belongs to the NDK family. Homotetramer. Mg(2+) is required as a cofactor.

The protein localises to the cytoplasm. The enzyme catalyses a 2'-deoxyribonucleoside 5'-diphosphate + ATP = a 2'-deoxyribonucleoside 5'-triphosphate + ADP. It carries out the reaction a ribonucleoside 5'-diphosphate + ATP = a ribonucleoside 5'-triphosphate + ADP. Major role in the synthesis of nucleoside triphosphates other than ATP. The ATP gamma phosphate is transferred to the NDP beta phosphate via a ping-pong mechanism, using a phosphorylated active-site intermediate. The sequence is that of Nucleoside diphosphate kinase from Pasteurella multocida (strain Pm70).